The following is a 101-amino-acid chain: Nucleoid-associated protein Bind_0255 (101 aa).

This sequence belongs to the YbaB/EbfC family. Homodimer.

It is found in the cytoplasm. Its subcellular location is the nucleoid. Functionally, binds to DNA and alters its conformation. May be involved in regulation of gene expression, nucleoid organization and DNA protection. The polypeptide is Nucleoid-associated protein Bind_0255 (Beijerinckia indica subsp. indica (strain ATCC 9039 / DSM 1715 / NCIMB 8712)).